The chain runs to 580 residues: Multidrug resistance-like ATP-binding protein MdlB (580 aa).

The region spanning 25-310 (IILAFFLLLS…ITIQQSILQQ (286 aa)) is the ABC transmembrane type-1 domain. 5 helical membrane passes run 26-46 (ILAFFLLLSGATSEVLGPILI), 61-81 (FQLILIIIVIFIMLQILAVFF), 142-162 (VGPTFFRSITLIIIILFAMFT), 165-185 (WHMAIITIFIIPLVIIVMSIY), and 258-278 (LLSALVLCSFMFLFSYFSIGV). The ABC transporter domain occupies 341–575 (INIKNLSFKY…KGFYWKMYNF (235 aa)). An ATP-binding site is contributed by 375–382 (GQTGSGKS).

Belongs to the ABC transporter superfamily. Drug exporter-2 (TC 3.A.1.117) family.

It localises to the cell membrane. The enzyme catalyses ATP + H2O + xenobioticSide 1 = ADP + phosphate + xenobioticSide 2.. In Buchnera aphidicola subsp. Schizaphis graminum (strain Sg), this protein is Multidrug resistance-like ATP-binding protein MdlB (mdlB).